Reading from the N-terminus, the 570-residue chain is Alpha-glucosidase (570 aa).

The active-site Nucleophile is aspartate 206. The active-site Proton donor is glutamate 263.

The protein belongs to the glycosyl hydrolase 13 family.

The enzyme catalyses Hydrolysis of terminal, non-reducing (1-&gt;4)-linked alpha-D-glucose residues with release of alpha-D-glucose.. The polypeptide is Alpha-glucosidase (MAL2) (Candida albicans (Yeast)).